A 257-amino-acid polypeptide reads, in one-letter code: Hydroxyethylthiazole kinase (257 aa).

Position 42 (Met42) interacts with substrate. Positions 117 and 163 each coordinate ATP. Ala190 serves as a coordination point for substrate.

The protein belongs to the Thz kinase family. Mg(2+) is required as a cofactor.

It catalyses the reaction 5-(2-hydroxyethyl)-4-methylthiazole + ATP = 4-methyl-5-(2-phosphooxyethyl)-thiazole + ADP + H(+). Its pathway is cofactor biosynthesis; thiamine diphosphate biosynthesis; 4-methyl-5-(2-phosphoethyl)-thiazole from 5-(2-hydroxyethyl)-4-methylthiazole: step 1/1. In terms of biological role, catalyzes the phosphorylation of the hydroxyl group of 4-methyl-5-beta-hydroxyethylthiazole (THZ). The polypeptide is Hydroxyethylthiazole kinase (Roseobacter denitrificans (strain ATCC 33942 / OCh 114) (Erythrobacter sp. (strain OCh 114))).